Here is a 355-residue protein sequence, read N- to C-terminus: Aurora kinase (355 aa).

The Protein kinase domain maps to 89–340 (FEIGKPLGKG…LEQVMRHPWI (252 aa)). Residues 95–103 (LGKGKFGRV) and Lys118 contribute to the ATP site. Residue Asp212 is the Proton acceptor of the active site.

This sequence belongs to the protein kinase superfamily. Ser/Thr protein kinase family. Aurora subfamily. In terms of assembly, component of the CPC complex at least composed of ark1, bir1 and pic1. Interacts with the mitotic checkpoint complex (MCC) subunit mad3.

Its subcellular location is the nucleus. It localises to the cytoplasm. The protein resides in the cytoskeleton. It is found in the spindle. It catalyses the reaction L-seryl-[protein] + ATP = O-phospho-L-seryl-[protein] + ADP + H(+). The enzyme catalyses L-threonyl-[protein] + ATP = O-phospho-L-threonyl-[protein] + ADP + H(+). Functionally, component of the chromosomal passenger complex (CPC), a complex that acts as a key regulator of chromosome segregation and cytokinesis. Has a role in error-correction of aberrent kinetochore-microtubule attachments to ensure that sister kinetochores become bioriented and connect to opposite poles by promoting spindle assembly checkpoint signaling. Ark1 is also required for phosphorylation of histone H3 that accompanies chromosome condensation and condensin recruitment to mitotic chromatin. In Schizosaccharomyces pombe (strain 972 / ATCC 24843) (Fission yeast), this protein is Aurora kinase (ark1).